Reading from the N-terminus, the 164-residue chain is Pheromone-binding protein (164 aa).

An N-terminal signal peptide occupies residues 1–22 (MSIQGQIALALMVNMAVGSVDA). Intrachain disulfides connect cysteine 41–cysteine 76, cysteine 72–cysteine 130, and cysteine 119–cysteine 139.

Belongs to the PBP/GOBP family. Homodimer. In terms of tissue distribution, antenna.

This major soluble protein in olfactory sensilla of male moths serves to solubilize the extremely hydrophobic pheromone molecules such as bombykol and to transport pheromone through the aqueous lymph to receptors located on olfactory cilia. This Bombyx mori (Silk moth) protein is Pheromone-binding protein.